The chain runs to 69 residues: Small archaeal modifier protein 2 (69 aa).

Lys55 is covalently cross-linked (Glycyl lysine isopeptide (Lys-Gly) (interchain with G-Cter in SAMP2)). Gly69 is modified (1-thioglycine; alternate). A Glycyl adenylate; alternate modification is found at Gly69. Gly69 is covalently cross-linked (Glycyl lysine isopeptide (Gly-Lys) (interchain with K-? in acceptor proteins); alternate).

The C-terminal glycine is likely acyl-adenylated (-COAMP) by UbaA, and also probably thiocarboxylated (-COSH) to function in sulfur transfer.

In terms of biological role, functions as a protein modifier covalently attached to lysine residues of substrate proteins, as well as a sulfur carrier in tRNA thiolation. The protein modification process is termed sampylation and involves the formation of an isopeptide bond between the SAMP2 C-terminal glycine carboxylate and the epsilon-amino group of lysine residues on target proteins. Is able to form polymeric chains with itself likely at Lys-55, similar to ubiquitin and other ubiquitin-like proteins. May serve as a proteolytic signal in the cell to target proteins for degradation by proteasomes. This Pyrococcus furiosus (strain ATCC 43587 / DSM 3638 / JCM 8422 / Vc1) protein is Small archaeal modifier protein 2.